A 333-amino-acid polypeptide reads, in one-letter code: Testin-2 (333 aa).

Residues 1–17 form the signal peptide; that stretch reads MIAVLFLAILCLEVDST. 3 cysteine pairs are disulfide-bonded: Cys135-Cys178, Cys169-Cys211, and Cys269-Cys322. N-linked (GlcNAc...) asparagine glycosylation occurs at Asn173. Active-site residues include His276 and Asn300.

The protein belongs to the peptidase C1 family. As to expression, sertoli cells.

The protein resides in the secreted. This Rattus norvegicus (Rat) protein is Testin-2 (Testin).